We begin with the raw amino-acid sequence, 281 residues long: Acidic leucine-rich nuclear phosphoprotein 32-related protein (281 aa).

LRR repeat units follow at residues 29–52 (YESL…EKEL), 56–78 (FKNL…IPSI), 79–103 (ATLN…IVQN), and 105–128 (PNIK…TLKE). Residues 140–178 (NPFADNPNYRKELFEFLPNVKIIDCYNKEGMEVLSSDEE) enclose the LRRCT domain. Positions 197–244 (FKDEDDEDEEFVPNDNEDDDEDDELDDDLEDEDMEDLDKEDLDKEDYD) are enriched in acidic residues. Positions 197–281 (FKDEDDEDEE…DMDLKKTKLE (85 aa)) are disordered. Residues 245–266 (IDTKETEGVNKDEKSNKRKQDA) show a composition bias toward basic and acidic residues.

Belongs to the ANP32 family.

The protein is Acidic leucine-rich nuclear phosphoprotein 32-related protein of Plasmodium falciparum (isolate 3D7).